We begin with the raw amino-acid sequence, 564 residues long: Threonine--tRNA ligase (564 aa).

Residues 167–464 are catalytic; it reads DHRSLGKQLE…LLEKTSGNFP (298 aa). Zn(2+) contacts are provided by C260, H311, and H441.

The protein belongs to the class-II aminoacyl-tRNA synthetase family. Homodimer. It depends on Zn(2+) as a cofactor.

The protein localises to the cytoplasm. It catalyses the reaction tRNA(Thr) + L-threonine + ATP = L-threonyl-tRNA(Thr) + AMP + diphosphate + H(+). Functionally, catalyzes the attachment of threonine to tRNA(Thr) in a two-step reaction: L-threonine is first activated by ATP to form Thr-AMP and then transferred to the acceptor end of tRNA(Thr). Also edits incorrectly charged L-seryl-tRNA(Thr). This chain is Threonine--tRNA ligase, found in Mycoplasma genitalium (strain ATCC 33530 / DSM 19775 / NCTC 10195 / G37) (Mycoplasmoides genitalium).